The chain runs to 250 residues: MARELKEVQGIIFKRQKYKEADLLAKIITKQSGIITLIVKGAMRPKSKLSAATLNFSAGTYVIYTSGHGLSNLRTYKKVQQFDALYRDLTKNAYVSFIFDLIDHAFVEYQPLGQYYNLAVFALEKISAGVDSEMITQIVQMKMLSAYGVKPELSHCVICGKEKGIFDYSIKLGGVICSDHFNVVESRLHLKPKETAILRTIGLLPIERLGTIKVSEESKRATRKAIDRIYRETIDLNLKTKKFLDELKLF.

This sequence belongs to the RecO family.

Functionally, involved in DNA repair and RecF pathway recombination. The sequence is that of DNA repair protein RecO from Lactobacillus acidophilus (strain ATCC 700396 / NCK56 / N2 / NCFM).